Reading from the N-terminus, the 828-residue chain is Periplasmic nitrate reductase (828 aa).

Positions 1–31 form a signal peptide, tat-type signal; sequence MKLSRRSFMKANAVAAAAAAAGLSVPGVARA. Residues 39 to 95 form the 4Fe-4S Mo/W bis-MGD-type domain; the sequence is IKWDKAPCRFCGTGCGVLVGTQQGRVVACQGDPDAPVNRGLNCIKGYFLPKIMYGKD. 4 residues coordinate [4Fe-4S] cluster: cysteine 46, cysteine 49, cysteine 53, and cysteine 81. Residues lysine 83, glutamine 150, asparagine 175, cysteine 179, 212 to 219, 243 to 247, 262 to 264, methionine 372, glutamine 376, asparagine 482, 508 to 509, lysine 531, aspartate 558, and 718 to 727 contribute to the Mo-bis(molybdopterin guanine dinucleotide) site; these read WGSNMAEM, STYQH, QSD, SD, and TGRVLEHWHT. Residue phenylalanine 794 coordinates substrate. Mo-bis(molybdopterin guanine dinucleotide) is bound by residues asparagine 802 and lysine 819.

This sequence belongs to the prokaryotic molybdopterin-containing oxidoreductase family. NasA/NapA/NarB subfamily. As to quaternary structure, component of the periplasmic nitrate reductase NapAB complex composed of NapA and NapB. [4Fe-4S] cluster is required as a cofactor. Mo-bis(molybdopterin guanine dinucleotide) serves as cofactor. Post-translationally, predicted to be exported by the Tat system. The position of the signal peptide cleavage has not been experimentally proven.

It is found in the periplasm. It carries out the reaction 2 Fe(II)-[cytochrome] + nitrate + 2 H(+) = 2 Fe(III)-[cytochrome] + nitrite + H2O. In terms of biological role, catalytic subunit of the periplasmic nitrate reductase complex NapAB. Receives electrons from NapB and catalyzes the reduction of nitrate to nitrite. This Escherichia coli O81 (strain ED1a) protein is Periplasmic nitrate reductase.